Here is a 295-residue protein sequence, read N- to C-terminus: Cytidine deaminase (295 aa).

2 consecutive CMP/dCMP-type deaminase domains span residues 48-168 and 187-295; these read TDNQ…FGPS and EDDD…YLSL. Residue 89–91 participates in substrate binding; it reads NME. His-102 is a Zn(2+) binding site. The active-site Proton donor is the Glu-104. Residues Cys-129 and Cys-132 each coordinate Zn(2+).

It belongs to the cytidine and deoxycytidylate deaminase family. In terms of assembly, homodimer. Requires Zn(2+) as cofactor.

The enzyme catalyses cytidine + H2O + H(+) = uridine + NH4(+). The catalysed reaction is 2'-deoxycytidine + H2O + H(+) = 2'-deoxyuridine + NH4(+). In terms of biological role, this enzyme scavenges exogenous and endogenous cytidine and 2'-deoxycytidine for UMP synthesis. This is Cytidine deaminase from Vibrio vulnificus (strain YJ016).